Consider the following 65-residue polypeptide: Protein C13 (65 aa).

It belongs to the poxviridae C13 protein family.

This Vaccinia virus (strain Copenhagen) (VACV) protein is Protein C13.